The primary structure comprises 139 residues: Actin-depolymerizing factor 7 (139 aa).

An ADF-H domain is found at 7–139; sequence GMAVDDECKL…GLDVIRGRAN (133 aa).

The protein belongs to the actin-binding proteins ADF family.

In terms of biological role, actin-depolymerizing protein. Severs actin filaments (F-actin) and binds to actin monomers. In Oryza sativa subsp. japonica (Rice), this protein is Actin-depolymerizing factor 7 (ADF7).